Reading from the N-terminus, the 418-residue chain is Outer membrane protein assembly factor BamB (418 aa).

An N-terminal signal peptide occupies residues 1-28 (MFHNTCGRKGRFARAMGMALAISVTLSG). C29 is lipidated: N-palmitoyl cysteine. Residue C29 is the site of S-diacylglycerol cysteine attachment.

It belongs to the BamB family. As to quaternary structure, part of the Bam complex.

Its subcellular location is the cell outer membrane. Part of the outer membrane protein assembly complex, which is involved in assembly and insertion of beta-barrel proteins into the outer membrane. This is Outer membrane protein assembly factor BamB from Alteromonas naphthalenivorans.